The sequence spans 230 residues: Orotidine 5'-phosphate decarboxylase (230 aa).

Substrate-binding positions include Asp-10, Lys-31, 58-67, Thr-117, Arg-179, Gln-188, Gly-208, and Arg-209; that span reads DLKLHDIPNT. Lys-60 acts as the Proton donor in catalysis.

The protein belongs to the OMP decarboxylase family. Type 1 subfamily. Homodimer.

The catalysed reaction is orotidine 5'-phosphate + H(+) = UMP + CO2. Its pathway is pyrimidine metabolism; UMP biosynthesis via de novo pathway; UMP from orotate: step 2/2. Its function is as follows. Catalyzes the decarboxylation of orotidine 5'-monophosphate (OMP) to uridine 5'-monophosphate (UMP). The polypeptide is Orotidine 5'-phosphate decarboxylase (Staphylococcus haemolyticus (strain JCSC1435)).